Consider the following 73-residue polypeptide: Venom protein 55.1 (73 aa).

The N-terminal stretch at Met1 to Cys19 is a signal peptide. At Pro57 the chain carries Proline amide. Positions Arg61–Lys73 are excised as a propeptide.

Belongs to the diuretic hormone class 2 family. In terms of tissue distribution, expressed by the venom gland.

Its subcellular location is the secreted. Its function is as follows. Regulates fluid secretion. This chain is Venom protein 55.1, found in Lychas mucronatus (Chinese swimming scorpion).